A 93-amino-acid chain; its full sequence is SH3 domain-binding glutamic acid-rich-like protein 3 (93 aa).

The residue at position 2 (Ser-2) is an N-acetylserine. An O-linked (GalNAc...) serine glycan is attached at Ser-2. Positions 2–93 (SGRRVYSTSV…NTLQEFLKLA (92 aa)) constitute a Glutaredoxin domain. 2 O-linked (GalNAc...) threonine glycosylation sites follow: Thr-9 and Thr-12.

Belongs to the SH3BGR family. Homodimer. Interacts with MYO1C (via its IQ motifs); the interaction is dependent on calcium and takes place at membrane ruffles. Post-translationally, may be glycosylated.

It localises to the cytoplasm. Its subcellular location is the cytosol. The protein resides in the cell projection. The protein localises to the ruffle membrane. It is found in the nucleus. Functionally, could act as a modulator of glutaredoxin biological activity. May play a role in cytoskeleton organization. The polypeptide is SH3 domain-binding glutamic acid-rich-like protein 3 (SH3BGRL3) (Pongo abelii (Sumatran orangutan)).